Consider the following 254-residue polypeptide: Major prion protein (254 aa).

Residues 1 to 22 (MANLGYWLLALFVTMWTDVGLC) form the signal peptide. The interval 23–38 (KKRPKPGGWNTGGSRY) is interaction with ADGRG6. Residues 23 to 231 (KKRPKPGGWN…QAYYDGRRSS (209 aa)) are interaction with GRB2, ERI3 and SYN1. The interval 25 to 104 (RPKPGGWNTG…HNQWNKPSKP (80 aa)) is disordered. P44 carries the post-translational modification Hydroxyproline. Repeat copies occupy residues 51-58 (PQGGTWGQ), 59-66 (PHGGGWGQ), 67-74 (PHGGSWGQ), 75-82 (PHGGSWGQ), and 83-90 (PHGGGWGQ). The interval 51 to 90 (PQGGTWGQPHGGGWGQPHGGSWGQPHGGSWGQPHGGGWGQ) is 5 X 8 AA tandem repeats of P-H-G-G-G-W-G-Q. Residues 54–94 (GTWGQPHGGGWGQPHGGSWGQPHGGSWGQPHGGGWGQGGGT) show a composition bias toward gly residues. Residues H60, G61, G62, H68, G69, G70, H76, G77, G78, H84, G85, and G86 each coordinate Cu(2+). C178 and C213 are disulfide-bonded. N-linked (GlcNAc...) asparagine glycans are attached at residues N180 and N196. Residue S230 is the site of GPI-anchor amidated serine attachment. A propeptide spans 231 to 254 (SSTVLFSSPPVILLISFLIFLIVG) (removed in mature form).

This sequence belongs to the prion family. As to quaternary structure, monomer and homodimer. Has a tendency to aggregate into amyloid fibrils containing a cross-beta spine, formed by a steric zipper of superposed beta-strands. Soluble oligomers may represent an intermediate stage on the path to fibril formation. Copper binding may promote oligomerization. Interacts with GRB2, APP, ERI3/PRNPIP and SYN1. Mislocalized cytosolically exposed PrP interacts with MGRN1; this interaction alters MGRN1 subcellular location and causes lysosomal enlargement. Interacts with APP. Interacts with KIAA1191. Interacts with ADGRG6. Post-translationally, N-glycosylated. In terms of tissue distribution, highly expressed in the brain, lung, kidney and heart. Expressed at low levels in the liver and spleen.

The protein resides in the cell membrane. It is found in the golgi apparatus. Functionally, its primary physiological function is unclear. May play a role in neuronal development and synaptic plasticity. May be required for neuronal myelin sheath maintenance. May promote myelin homeostasis through acting as an agonist for ADGRG6 receptor. May play a role in iron uptake and iron homeostasis. Soluble oligomers are toxic to cultured neuroblastoma cells and induce apoptosis (in vitro). Association with GPC1 (via its heparan sulfate chains) targets PRNP to lipid rafts. Also provides Cu(2+) or Zn(2+) for the ascorbate-mediated GPC1 deaminase degradation of its heparan sulfate side chains. The polypeptide is Major prion protein (Prnp) (Mus musculus (Mouse)).